Consider the following 451-residue polypeptide: Tubulin alpha chain (451 aa).

GTP is bound at residue Gln-11. The residue at position 40 (Lys-40) is an N6-acetyllysine. The GTP site is built by Glu-71, Ser-140, Gly-144, Thr-145, Thr-179, Asn-206, and Asn-228. Glu-71 serves as a coordination point for Mg(2+). Residue Glu-254 is part of the active site.

It belongs to the tubulin family. Dimer of alpha and beta chains. A typical microtubule is a hollow water-filled tube with an outer diameter of 25 nm and an inner diameter of 15 nM. Alpha-beta heterodimers associate head-to-tail to form protofilaments running lengthwise along the microtubule wall with the beta-tubulin subunit facing the microtubule plus end conferring a structural polarity. Microtubules usually have 13 protofilaments but different protofilament numbers can be found in some organisms and specialized cells. The cofactor is Mg(2+). Undergoes a tyrosination/detyrosination cycle, the cyclic removal and re-addition of a C-terminal tyrosine residue by the enzymes tubulin tyrosine carboxypeptidase (TTCP) and tubulin tyrosine ligase (TTL), respectively. Post-translationally, acetylation of alpha chains at Lys-40 stabilizes microtubules and affects affinity and processivity of microtubule motors. This modification has a role in multiple cellular functions, ranging from cell motility, cell cycle progression or cell differentiation to intracellular trafficking and signaling. In terms of tissue distribution, actively expressed in the lens but does not seem to be lens-specific.

It localises to the cytoplasm. The protein localises to the cytoskeleton. The enzyme catalyses GTP + H2O = GDP + phosphate + H(+). Functionally, tubulin is the major constituent of microtubules, a cylinder consisting of laterally associated linear protofilaments composed of alpha- and beta-tubulin heterodimers. Microtubules grow by the addition of GTP-tubulin dimers to the microtubule end, where a stabilizing cap forms. Below the cap, tubulin dimers are in GDP-bound state, owing to GTPase activity of alpha-tubulin. The sequence is that of Tubulin alpha chain from Enteroctopus dofleini (North Pacific giant octopus).